Here is a 2346-residue protein sequence, read N- to C-terminus: Acetyl-CoA carboxylase 1 (2346 aa).

Methionine 1 is subject to N-acetylmethionine. Residues serine 5, serine 23, serine 25, serine 29, serine 34, serine 48, serine 50, and serine 53 each carry the phosphoserine modification. Phosphothreonine is present on threonine 58. A Phosphoserine modification is found at serine 78. Residue serine 80 is modified to Phosphoserine; by AMPK. A Biotin carboxylation domain is found at 117–618 (VIEKVLIANN…GTGWLDRLIA (502 aa)). The region spanning 275–466 (SKRILNVPQE…LPAAQLQIAM (192 aa)) is the ATP-grasp domain. 315-320 (GGGGKG) provides a ligand contact to ATP. Glutamate 424, glutamate 437, and asparagine 439 together coordinate Mg(2+). Residues glutamate 424, glutamate 437, and asparagine 439 each contribute to the Mn(2+) site. Arginine 441 is an active-site residue. The residue at position 610 (threonine 610) is a Phosphothreonine. In terms of domain architecture, Biotinyl-binding spans 745–819 (FEKENDPSVL…DPGCVIAKMQ (75 aa)). An N6-biotinyllysine modification is found at lysine 786. Phosphoserine occurs at positions 835, 1201, 1216, and 1218. The residue at position 1227 (threonine 1227) is a Phosphothreonine. A phosphoserine mark is found at serine 1259, serine 1263, and serine 1273. At lysine 1334 the chain carries N6-acetyllysine. Residues 1576–1914 (PYVTKDQLQS…SVYSSVPLLN (339 aa)) enclose the CoA carboxyltransferase N-terminal domain. The tract at residues 1576-2234 (PYVTKDQLQS…EDLVKKKIHN (659 aa)) is carboxyltransferase. CoA contacts are provided by arginine 1823, lysine 2127, and arginine 2129. Residues 1918 to 2234 (PIDRVIEFVP…EDLVKKKIHN (317 aa)) enclose the CoA carboxyltransferase C-terminal domain. Threonine 2153 carries the phosphothreonine modification.

Monomer, homodimer, and homotetramer. Can form filamentous polymers. Interacts in its inactive phosphorylated form with the BRCT domains of BRCA1 which prevents ACACA dephosphorylation and inhibits lipid synthesis. Interacts with MID1IP1; interaction with MID1IP1 promotes oligomerization and increases its activity. Mg(2+) is required as a cofactor. Mn(2+) serves as cofactor. Requires biotin as cofactor. Post-translationally, phosphorylation on Ser-1263 is required for interaction with BRCA1. Phosphorylation at Ser-80 by AMPK inactivates enzyme activity. In terms of processing, the biotin cofactor is covalently attached to the central biotinyl-binding domain and is required for the catalytic activity.

It localises to the cytoplasm. The protein resides in the cytosol. The catalysed reaction is hydrogencarbonate + acetyl-CoA + ATP = malonyl-CoA + ADP + phosphate + H(+). It participates in lipid metabolism; malonyl-CoA biosynthesis; malonyl-CoA from acetyl-CoA: step 1/1. Inhibited by phosphorylation. Citrate promotes oligomerization of the protein into filaments that correspond to the most active form of the carboxylase. In terms of biological role, cytosolic enzyme that catalyzes the carboxylation of acetyl-CoA to malonyl-CoA, the first and rate-limiting step of de novo fatty acid biosynthesis. This is a 2 steps reaction starting with the ATP-dependent carboxylation of the biotin carried by the biotin carboxyl carrier (BCC) domain followed by the transfer of the carboxyl group from carboxylated biotin to acetyl-CoA. This Bos taurus (Bovine) protein is Acetyl-CoA carboxylase 1.